The sequence spans 985 residues: Coiled-coil domain-containing protein 33 (985 aa).

The interval 228-263 is disordered; that stretch reads MSPFSTDSDQEGLSWEAGPWQHPAQVPEEPQGRLDT. The 136-residue stretch at 263-398 folds into the C2 domain; that stretch reads TSQDPYPAAN…VFLRGVNEPL (136 aa). Positions 599–745 form a coiled coil; it reads VEMNNYRRAM…LEERLCERKE (147 aa). Residues 821–842 form a disordered region; the sequence is AERLQDTNGPGHPKSTETLPAQ. Positions 885–928 form a coiled coil; sequence DKFNLLAKLEQAQSRILSLENQLEESARHWAREKQNLAIRLQEQ. Residues 931-985 are disordered; the sequence is GFGQPPNSIIIDQPNAGASKNPQQLSKLEPSLPSSDKKLNRPSDSQIEISNNQKT. Composition is skewed to polar residues over residues 946–956 and 972–985; these read AGASKNPQQLS and PSDSQIEISNNQKT.

The sequence is that of Coiled-coil domain-containing protein 33 (Ccdc33) from Mus musculus (Mouse).